The sequence spans 370 residues: uncharacterized protein (370 aa).

The a divalent metal cation site is built by aspartate 152, histidine 154, aspartate 184, asparagine 215, histidine 306, and histidine 308.

Belongs to the metallophosphoesterase superfamily. A divalent metal cation is required as a cofactor.

This is an uncharacterized protein from Helicobacter pylori (strain ATCC 700392 / 26695) (Campylobacter pylori).